The sequence spans 317 residues: tRNA(Ile)-lysidine synthase (317 aa).

32–37 provides a ligand contact to ATP; that stretch reads SGGVDS.

This sequence belongs to the tRNA(Ile)-lysidine synthase family.

It localises to the cytoplasm. The catalysed reaction is cytidine(34) in tRNA(Ile2) + L-lysine + ATP = lysidine(34) in tRNA(Ile2) + AMP + diphosphate + H(+). In terms of biological role, ligates lysine onto the cytidine present at position 34 of the AUA codon-specific tRNA(Ile) that contains the anticodon CAU, in an ATP-dependent manner. Cytidine is converted to lysidine, thus changing the amino acid specificity of the tRNA from methionine to isoleucine. The protein is tRNA(Ile)-lysidine synthase of Aquifex aeolicus (strain VF5).